A 317-amino-acid chain; its full sequence is Metaxin-1 (317 aa).

Residues lysine 38, lysine 41, and lysine 78 each participate in a glycyl lysine isopeptide (Lys-Gly) (interchain with G-Cter in ubiquitin) cross-link. Residues 164 to 184 (EELEKELYQEAQECLTLLSQR) traverse the membrane as a helical segment.

It belongs to the metaxin family. As to quaternary structure, interacts with MTX2/metaxin-2. Associates with the mitochondrial contact site and cristae organizing system (MICOS) complex, composed of at least MICOS10/MIC10, CHCHD3/MIC19, CHCHD6/MIC25, APOOL/MIC27, IMMT/MIC60, APOO/MIC23/MIC26 and QIL1/MIC13. This complex was also known under the names MINOS or MitOS complex. The MICOS complex associates with mitochondrial outer membrane proteins SAMM50, MTX1 and MTX2 (together described as components of the mitochondrial outer membrane sorting assembly machinery (SAM) complex) and DNAJC11, mitochondrial inner membrane protein TMEM11 and with HSPA9. The MICOS and SAM complexes together with DNAJC11 are part of a large protein complex spanning both membranes termed the mitochondrial intermembrane space bridging (MIB) complex. Interacts with ARMC1. In terms of processing, ubiquitinated by PRKN during mitophagy, leading to its degradation and enhancement of mitophagy. Deubiquitinated by USP30.

The protein localises to the mitochondrion outer membrane. Functionally, involved in transport of proteins into the mitochondrion. Essential for embryonic development. The sequence is that of Metaxin-1 (MTX1) from Bos taurus (Bovine).